The chain runs to 805 residues: Endonuclease MutS2 (805 aa).

344–351 contributes to the ATP binding site; it reads GPNGGGKT. Positions 705-724 are disordered; it reads RSRSEKLQAASEARPSAPPG. The Smr domain occupies 729 to 804; that stretch reads LDVRGLRVEE…GDAVTVVSLR (76 aa).

The protein belongs to the DNA mismatch repair MutS family. MutS2 subfamily. In terms of assembly, homodimer. Binds to stalled ribosomes, contacting rRNA.

In terms of biological role, endonuclease that is involved in the suppression of homologous recombination and thus may have a key role in the control of bacterial genetic diversity. Acts as a ribosome collision sensor, splitting the ribosome into its 2 subunits. Detects stalled/collided 70S ribosomes which it binds and splits by an ATP-hydrolysis driven conformational change. Acts upstream of the ribosome quality control system (RQC), a ribosome-associated complex that mediates the extraction of incompletely synthesized nascent chains from stalled ribosomes and their subsequent degradation. Probably generates substrates for RQC. The protein is Endonuclease MutS2 of Anaeromyxobacter sp. (strain Fw109-5).